A 65-amino-acid chain; its full sequence is Neurotoxin BmK AGAP-SYPU2 (65 aa).

Residues lysine 2–asparagine 64 form the LCN-type CS-alpha/beta domain. Disulfide bonds link cysteine 12–cysteine 63, cysteine 16–cysteine 36, cysteine 22–cysteine 46, and cysteine 26–cysteine 48.

As to expression, expressed by the venom gland.

It localises to the secreted. Its function is as follows. Alpha toxins bind voltage-independently at site-3 of sodium channels and inhibit the inactivation of the activated channels, thereby blocking neuronal transmission. In vivo, shows analgesic activity (ED(50) is 1.42 mg/kg) and antitumor activity against Ehrlich ascites tumor and S-180 fibrosarcoma models. The chain is Neurotoxin BmK AGAP-SYPU2 from Olivierus martensii (Manchurian scorpion).